A 122-amino-acid polypeptide reads, in one-letter code: Ribonuclease pancreatic (122 aa).

The span at 1–16 shows a compositional bias: basic and acidic residues; that stretch reads ETPAEKFQRQHMDTEH. The interval 1–20 is disordered; the sequence is ETPAEKFQRQHMDTEHSTAS. Lys-6 and Arg-9 together coordinate substrate. Residue His-11 is the Proton acceptor of the active site. Cystine bridges form between Cys-25/Cys-83, Cys-39/Cys-94, Cys-57/Cys-109, and Cys-64/Cys-71. Residues 40–44, Lys-65, and Arg-84 each bind substrate; that span reads KPLNT. The active-site Proton donor is His-117.

It belongs to the pancreatic ribonuclease family. In terms of assembly, monomer. Interacts with and forms tight 1:1 complexes with RNH1. Dimerization of two such complexes may occur. Interaction with RNH1 inhibits this protein. Post-translationally, not glycosylated although the sequence N-V-T, a recognition site for carbohydrate attachment, is present. In terms of tissue distribution, pancreas.

It is found in the secreted. It carries out the reaction an [RNA] containing cytidine + H2O = an [RNA]-3'-cytidine-3'-phosphate + a 5'-hydroxy-ribonucleotide-3'-[RNA].. The enzyme catalyses an [RNA] containing uridine + H2O = an [RNA]-3'-uridine-3'-phosphate + a 5'-hydroxy-ribonucleotide-3'-[RNA].. Its function is as follows. Endonuclease that catalyzes the cleavage of RNA on the 3' side of pyrimidine nucleotides. Acts on single-stranded and double-stranded RNA. This chain is Ribonuclease pancreatic (RNASE1), found in Osphranter rufus (Red kangaroo).